Reading from the N-terminus, the 416-residue chain is Coenzyme F420H(2) oxidase (416 aa).

Residues His-87, Glu-89, Asp-91, His-92, His-155, Asp-174, and His-239 each coordinate Fe cation. Positions 266–407 constitute a Flavodoxin-like domain; the sequence is AVIVYDTMHY…NCYNMGKELA (142 aa). Residues 272–277, 324–327, and 359–364 contribute to the FMN site; these read TMHYST, TIYD, and SMGGEG.

This sequence in the N-terminal section; belongs to the zinc metallo-hydrolase group 3 family. FMN serves as cofactor. It depends on Fe cation as a cofactor.

The enzyme catalyses 2 reduced coenzyme F420-(gamma-L-Glu)(n) + O2 = 2 oxidized coenzyme F420-(gamma-L-Glu)(n) + 2 H2O + 2 H(+). Functionally, catalyzes the oxidation of F420H(2) with O(2). May be involved in O(2) detoxification, reducing the intracellular O(2) concentration to a level allowing growth at the expense of methane formation. The sequence is that of Coenzyme F420H(2) oxidase (fprA) from Methanocaldococcus jannaschii (strain ATCC 43067 / DSM 2661 / JAL-1 / JCM 10045 / NBRC 100440) (Methanococcus jannaschii).